The sequence spans 366 residues: Transmembrane protein 25 (366 aa).

Positions 1–26 (MALPPGPAALRHTLLLLPALLSSGWG) are cleaved as a signal peptide. At 27 to 232 (ELEPQIDGQT…APGLLATRVE (206 aa)) the chain is on the extracellular side. One can recognise an Ig-like domain in the interval 30 to 123 (PQIDGQTWAE…SGRSANASVI (94 aa)). Cys52 and Cys107 form a disulfide bridge. 5 N-linked (GlcNAc...) asparagine glycosylation sites follow: Asn106, Asn162, Asn175, Asn192, and Asn205. The helical transmembrane segment at 233 to 253 (VPLLGIVVAAGLALGTLVGFS) threads the bilayer. Topologically, residues 254–366 (TLVACLVCRK…SSVSSDEIWL (113 aa)) are cytoplasmic. The span at 299-308 (PSNLQLNDLT) shows a compositional bias: polar residues. A disordered region spans residues 299–335 (PSNLQLNDLTPDSRAVKPADRQMAQNNSRPELLDPEP).

In terms of assembly, interacts with GRIN2B. As to expression, expressed throughout the brain with higher levels in the pyramidal cell layer of the hippocampal CA1 and CA3 regions. Also highly expressed within the hippocampal dentate gyrus region and cerebellum and in scattered neurons in the cerebral cortex.

It localises to the cell membrane. It is found in the secreted. Its subcellular location is the late endosome. The protein localises to the lysosome. In terms of biological role, in neurons, modulates the degradation of NMDA receptor GRIN2B subunit. Plays a role in the regulation of neuronal excitability. The sequence is that of Transmembrane protein 25 (TMEM25) from Homo sapiens (Human).